Reading from the N-terminus, the 526-residue chain is Phosphoenolpyruvate carboxylase (526 aa).

Belongs to the PEPCase type 2 family. As to quaternary structure, homotetramer. The cofactor is Mg(2+).

The catalysed reaction is oxaloacetate + phosphate = phosphoenolpyruvate + hydrogencarbonate. In terms of biological role, catalyzes the irreversible beta-carboxylation of phosphoenolpyruvate (PEP) to form oxaloacetate (OAA), a four-carbon dicarboxylic acid source for the tricarboxylic acid cycle. The polypeptide is Phosphoenolpyruvate carboxylase (Methanosarcina acetivorans (strain ATCC 35395 / DSM 2834 / JCM 12185 / C2A)).